The chain runs to 231 residues: Small ribosomal subunit protein uS3 (231 aa).

The KH type-2 domain maps to 17–86 (VEQYLNKELK…SPQVEVQQVA (70 aa)).

Belongs to the universal ribosomal protein uS3 family. As to quaternary structure, part of the 30S ribosomal subunit.

Functionally, binds the lower part of the 30S subunit head. The protein is Small ribosomal subunit protein uS3 of Methanocorpusculum labreanum (strain ATCC 43576 / DSM 4855 / Z).